Reading from the N-terminus, the 591-residue chain is Inactive metallocarboxypeptidase ECM14 (591 aa).

Positions 1-21 (MRLFSHLAVLAILACAVPITA) are cleaved as a signal peptide. The propeptide occupies 22 to 175 (IPSFLSNSYP…QTIYESYPSS (154 aa)). The 321-residue stretch at 203 to 523 (DYQPFSVIVP…NAVMVLGRFL (321 aa)) folds into the Peptidase M14 domain. Residues H265 and E268 each contribute to the Zn(2+) site. Residues 265–268 (HARE), R323, and 340–341 (DR) each bind substrate. C334 and C357 are disulfide-bonded. N350, N381, and N386 each carry an N-linked (GlcNAc...) asparagine glycan. Residue H397 participates in Zn(2+) binding. Residue 398 to 399 (SY) coordinates substrate. The disordered stretch occupies residues 533 to 591 (DWEDESQRPKADEDDIPSENELDENDDSWIPYDYRNHDDQNEGEGYDNDEWGFRRRRKR). 2 stretches are compositionally biased toward acidic residues: residues 544–559 (DEDD…ENDD) and 573–582 (NEGEGYDNDE).

It belongs to the peptidase M14 family. Zn(2+) is required as a cofactor.

Its subcellular location is the vacuole. The protein localises to the secreted. In terms of biological role, inactive carboxypeptidase that may play a role in cell wall organization and biogenesis. The chain is Inactive metallocarboxypeptidase ECM14 (ECM14) from Paracoccidioides brasiliensis (strain Pb18).